We begin with the raw amino-acid sequence, 1832 residues long: Zinc finger protein 646 (1832 aa).

8 consecutive C2H2-type zinc fingers follow at residues 8 to 31 (LSCS…ELLH), 48 to 70 (YRCQ…RRTH), 75 to 97 (FPCT…MRTH), 239 to 261 (YKCS…RQSH), 266 to 288 (YPCA…SRLH), 294 to 316 (YHCP…QQSH), 374 to 396 (FRCG…RKSH), and 401 to 424 (YPCS…RAHH). The disordered stretch occupies residues 26–47 (HRELLHPSPNQDSEEADSIPRP). The span at 94-108 (MRTHAPEGRRRHRPP) shows a compositional bias: basic residues. The segment at 94 to 200 (MRTHAPEGRR…TNSARAPPLP (107 aa)) is disordered. A compositionally biased stretch (basic and acidic residues) spans 313–329 (QQSHEGERQEPRWEEKG). The segment at 313-346 (QQSHEGERQEPRWEEKGMPTTNGHTDESSQDQLP) is disordered. Lys-451 is covalently cross-linked (Glycyl lysine isopeptide (Lys-Gly) (interchain with G-Cter in SUMO2)). 2 consecutive C2H2-type zinc fingers follow at residues 465 to 487 (YKCS…RHSH) and 492 to 514 (YQCS…VRVH). Glycyl lysine isopeptide (Lys-Gly) (interchain with G-Cter in SUMO2) cross-links involve residues Lys-534 and Lys-557. The C2H2-type 11 zinc-finger motif lies at 575–597 (HICSICGLLFEDAESLERHGLTH). Ser-612 is subject to Phosphoserine. C2H2-type zinc fingers lie at residues 617–639 (FACR…RQTH) and 644–666 (FSCG…LRRH). The disordered stretch occupies residues 660-810 (KNHLRRHSRR…QPNSSSHSAN (151 aa)). Residues 661 to 678 (NHLRRHSRRRSRRHRKRA) are compositionally biased toward basic residues. Lys-688 participates in a covalent cross-link: Glycyl lysine isopeptide (Lys-Gly) (interchain with G-Cter in SUMO2). Residues 735-767 (EGDKCGLERDETHFQGDKESGGTGEGLERKDAS) show a composition bias toward basic and acidic residues. Residues 798-810 (ATGQPNSSSHSAN) show a composition bias toward polar residues. 3 C2H2-type zinc fingers span residues 821–843 (HTCS…RPCH), 848–870 (YQCS…FQNH), and 881–904 (FLCC…RQAH). The interval 901–931 (RQAHSSSGMTEGSEEEGEEEGVAEAAPARSP) is disordered. Residues 912–922 (GSEEEGEEEGV) are compositionally biased toward acidic residues. A C2H2-type 17; degenerate zinc finger spans residues 958–980 (HICGCCGQTYDDLGSLERHHQSQ). 2 consecutive C2H2-type zinc fingers follow at residues 1052-1074 (FRCN…RKIH) and 1079-1101 (FLCP…LRNH). Positions 1103–1148 (RCKGSEPQVGPIPEAAGSSELQVGPIPEGGSNKPQHMAEEGPGQAE) are disordered. Residues Lys-1157, Lys-1168, and Lys-1178 each participate in a glycyl lysine isopeptide (Lys-Gly) (interchain with G-Cter in SUMO2) cross-link. 6 C2H2-type zinc fingers span residues 1203 to 1225 (FSCE…RQSH), 1230 to 1252 (FGCQ…RRIH), 1258 to 1280 (FRCS…QRVH), 1299 to 1321 (FRCG…RRSH), 1326 to 1348 (YSCP…QRLH), and 1364 to 1386 (VRCA…LREH). The tract at residues 1274 to 1294 (ASHQRVHMERRGGGGTRKATR) is disordered. Disordered stretches follow at residues 1377 to 1481 (GSLE…WVPQ) and 1509 to 1529 (TLSH…QPGS). Positions 1378–1393 (SLERHLREHEETEREP) are enriched in basic and acidic residues. Polar residues predominate over residues 1406 to 1417 (SEANLTGSQGLE). Basic and acidic residues predominate over residues 1427 to 1438 (PHLEDGVPRPGE). Positions 1460–1475 (GKAGGWPVGGGLGNHS) are enriched in gly residues. C2H2-type zinc fingers lie at residues 1557-1579 (HYCL…SHNH), 1585-1607 (FACP…LQAH), 1677-1699 (FRCT…QKAH), 1704-1726 (YPCS…SRTH), 1732-1754 (HCCS…GRVH), and 1761-1783 (FTCP…QQQH). Residues 1606 to 1672 (AHARGHSQVP…QAVTSMAAED (67 aa)) form a disordered region. The tract at residues 1781-1832 (QQHQEEWTVAGSGAPVAPVTGRGDLPLPPPPTPTTPLLDPSPQWPADLSFSL) is disordered.

This sequence belongs to the krueppel C2H2-type zinc-finger protein family.

It localises to the nucleus. Functionally, may be involved in transcriptional regulation. In Homo sapiens (Human), this protein is Zinc finger protein 646.